Consider the following 1755-residue polypeptide: Transposon Ty1-MR1 Gag-Pol polyprotein (1755 aa).

Polar residues-rich tracts occupy residues 1-31 (MESQ…TTQD), 46-60 (VSTQ…TPLS), and 137-168 (VGTH…TNQH). 3 disordered regions span residues 1-88 (MESQ…YPQQ), 137-174 (VGTH…PPPI), and 350-420 (QQES…IRGS). The segment at 299–401 (NNGIPINNKV…NSQSRTARAH (103 aa)) is RNA-binding. Residues 363 to 372 (SPSDEKKDSR) show a composition bias toward basic and acidic residues. Positions 373 to 411 (TYTNTTKPKSITRNSQKPNNSQSRTARAHNVSTFNNSPG) are enriched in polar residues. The active-site For protease activity; shared with dimeric partner is Asp-461. The tract at residues 583-640 (NVHTSESTRKYPYPFIHRMLAHANAQTIRYSLKNNTITYFNESDVDWSSAIDYQCPDC) is integrase-type zinc finger-like. In terms of domain architecture, Integrase catalytic spans 660–835 (NSYEPFQYLH…AGLDISTLLP (176 aa)). Residues Asp-671 and Asp-736 each contribute to the Mg(2+) site. Residues 958–1172 (AVSPTDSTPP…LGGIGDSNAY (215 aa)) are disordered. Residues 960 to 969 (SPTDSTPPST) are compositionally biased toward low complexity. The span at 1005–1015 (STPQISDIEST) shows a compositional bias: polar residues. Positions 1038 to 1053 (ESSHASKSKDFRHSDS) are enriched in basic and acidic residues. 2 stretches are compositionally biased toward polar residues: residues 1054 to 1082 (YSDN…QTSE) and 1095 to 1106 (SIDTSSSESNSL). A Bipartite nuclear localization signal motif is present at residues 1178 to 1212 (KKRSLEDNETEIKVSRDTWNTKNMRSLEPPRSKKR). Residues 1338 to 1476 (NNYYITQLDI…DILGLEIKYQ (139 aa)) form the Reverse transcriptase Ty1/copia-type domain. Asp-1346, Asp-1427, Asp-1428, Asp-1610, Glu-1652, and Asp-1685 together coordinate Mg(2+). An RNase H Ty1/copia-type domain is found at 1610-1752 (DASYGNQPYY…IKTFKLLTNK (143 aa)).

The capsid protein forms a homotrimer, from which the VLPs are assembled. The protease is a homodimer, whose active site consists of two apposed aspartic acid residues. Initially, virus-like particles (VLPs) are composed of the structural unprocessed proteins Gag and Gag-Pol, and also contain the host initiator methionine tRNA (tRNA(i)-Met) which serves as a primer for minus-strand DNA synthesis, and a dimer of genomic Ty RNA. Processing of the polyproteins occurs within the particle and proceeds by an ordered pathway, called maturation. First, the protease (PR) is released by autocatalytic cleavage of the Gag-Pol polyprotein yielding capsid protein p45 and a Pol-p154 precursor protein. This cleavage is a prerequisite for subsequent processing of Pol-p154 at the remaining sites to release the mature structural and catalytic proteins. Maturation takes place prior to the RT reaction and is required to produce transposition-competent VLPs.

The protein localises to the cytoplasm. Its subcellular location is the nucleus. It catalyses the reaction DNA(n) + a 2'-deoxyribonucleoside 5'-triphosphate = DNA(n+1) + diphosphate. It carries out the reaction Endonucleolytic cleavage to 5'-phosphomonoester.. Capsid protein (CA) is the structural component of the virus-like particle (VLP), forming the shell that encapsulates the retrotransposons dimeric RNA genome. The particles are assembled from trimer-clustered units and there are holes in the capsid shells that allow for the diffusion of macromolecules. CA also has nucleocapsid-like chaperone activity, promoting primer tRNA(i)-Met annealing to the multipartite primer-binding site (PBS), dimerization of Ty1 RNA and initiation of reverse transcription. Functionally, the aspartyl protease (PR) mediates the proteolytic cleavages of the Gag and Gag-Pol polyproteins after assembly of the VLP. In terms of biological role, reverse transcriptase/ribonuclease H (RT) is a multifunctional enzyme that catalyzes the conversion of the retro-elements RNA genome into dsDNA within the VLP. The enzyme displays a DNA polymerase activity that can copy either DNA or RNA templates, and a ribonuclease H (RNase H) activity that cleaves the RNA strand of RNA-DNA heteroduplexes during plus-strand synthesis and hydrolyzes RNA primers. The conversion leads to a linear dsDNA copy of the retrotransposon that includes long terminal repeats (LTRs) at both ends. Its function is as follows. Integrase (IN) targets the VLP to the nucleus, where a subparticle preintegration complex (PIC) containing at least integrase and the newly synthesized dsDNA copy of the retrotransposon must transit the nuclear membrane. Once in the nucleus, integrase performs the integration of the dsDNA into the host genome. This chain is Transposon Ty1-MR1 Gag-Pol polyprotein (TY1B-MR1), found in Saccharomyces cerevisiae (strain ATCC 204508 / S288c) (Baker's yeast).